We begin with the raw amino-acid sequence, 92 residues long: Putative defensin-like protein 225 (92 aa).

A signal peptide spans 1–26 (MKYGVLFMVSCGVMFLILSHVEEVEA). Disulfide bonds link Cys32–Cys92, Cys42–Cys70, and Cys68–Cys88.

Belongs to the DEFL family.

It localises to the secreted. This chain is Putative defensin-like protein 225 (SCRL1), found in Arabidopsis thaliana (Mouse-ear cress).